A 693-amino-acid chain; its full sequence is MWPQPYLPPHPMMLEESRQNKLAAAKKKLKEYQQRKSPGIPAGAKTKKKKTDSSPETTTSGGCHSPGDSQYQELAVALESSSVTISQLNENIESLKQQKKQVEHQLEEAKKTNNEIHKAQMERLETINILTLEKADLKTTLYHTKRAARHFEEESKDLAGRLQYSLQRIQELERALCAVSTQQQEEDRSSSCREAVLQRWLQQTIKERALLNAHVTQVTESLKQVQLERDEYAKHIKGERARWQERMWKMSVEARTLKEEKKRDIHRIQELERSLSELKNQMAEPPSLAPPAVTSVVEQLQDEAKHLRQEVEGLEGKLQSQVENNQALSLLSKEQKQRLQEQEEMLREQEAQRVREQERLCEQNERLREQQKTLQEQGERLRKQEQRLRKQEERLRKEEERLQKQEKRLWDQEERLWKKEERLQKQEERLALSQNHKLDKQLAEPQCSFEDLNNEKKSALQLEQQVKELQEKLDEEHLEAASHQNQQLETQLSLVALPGEGDGGQHLDSEEEEAPRPTPNIPEDLESREATSSFMDLPKEKADGTEQVERRELGFVQPSGVTDGMRESFTVYESQGAVPNTRHQEMEDVIRLAQKEEEMKVKLLELQELVLPLVGNHEGHGKFLIAAQNPADEPTPGAPAPQELGAAGEQDVFYEVSLDNNVEPAPGAAREGSPHDNPTVQQIVQLSPVMQDT.

A coiled-coil region spans residues Leu-14–Leu-611. Disordered stretches follow at residues Asn-20–Ser-69, Leu-497–Gln-547, and Asn-661–Thr-693. Polar residues predominate over residues Ser-54 to Ser-69. The span at Leu-537–Gln-547 shows a compositional bias: basic and acidic residues. The span at Asp-676–Thr-693 shows a compositional bias: polar residues.

The protein belongs to the GOLGA6 family. Highly expressed in seminiferous tubes in testis. Highly expressed in spermatids, barely detectable in late pachytene spermatocytes, and not detectable in spermatogonia. Detected at intermediate levels in pancreas and lymph nodes, and at much lower levels in spleen, peripheral blood leukocytes, skeletal muscle, liver, lung, placenta, brain and heart.

The protein is Golgin subfamily A member 6A (GOLGA6A) of Homo sapiens (Human).